Consider the following 274-residue polypeptide: DNA-directed RNA polymerase subunit Rpo3 (274 aa).

Residues Cys202, Cys205, and Cys208 each contribute to the [3Fe-4S] cluster site.

It belongs to the archaeal Rpo3/eukaryotic RPB3 RNA polymerase subunit family. As to quaternary structure, part of the RNA polymerase complex. The cofactor is [3Fe-4S] cluster.

It localises to the cytoplasm. It catalyses the reaction RNA(n) + a ribonucleoside 5'-triphosphate = RNA(n+1) + diphosphate. DNA-dependent RNA polymerase (RNAP) catalyzes the transcription of DNA into RNA using the four ribonucleoside triphosphates as substrates. The chain is DNA-directed RNA polymerase subunit Rpo3 from Methanobrevibacter smithii (strain ATCC 35061 / DSM 861 / OCM 144 / PS).